The sequence spans 1095 residues: Collagen, type I, alpha 1a (1095 aa).

Over residues 1–21 the composition is skewed to pro residues; sequence SPAMPVPGPMGPMGPRGPPGS. The interval 1 to 1011 is disordered; the sequence is SPAMPVPGPM…QPQEKAPDPY (1011 aa). Positions 22–49 are enriched in low complexity; the sequence is PGASGPQGFTGPPGEPGEAGSAGAMGPR. Residues 58–72 show a composition bias toward basic and acidic residues; that stretch reads NGEDGESGKPGRGGE. Positions 127 to 145 are enriched in low complexity; it reads TGAAGAAGARGNDGAAGAA. The span at 147-160 shows a compositional bias: pro residues; it reads PPGPTGPAGPPGFP. Positions 161–179 are enriched in gly residues; it reads GGPGAKGDAGAQGGRGPEG. Low complexity-rich tracts occupy residues 180–223, 232–270, and 288–297; these read PAGA…AGAP, SGPQ…APGV, and EPGAAGARGA. The segment covering 299-311 has biased composition (gly residues); the sequence is GERGGPGGRGFPG. Composition is skewed to low complexity over residues 385–400, 477–489, 498–544, and 577–592; these read VGAR…PGPK, LPGE…PAGA, ERGA…QGMP, and RGLT…AGAT. A compositionally biased stretch (gly residues) spans 602-611; the sequence is GPVGPGGARG. 2 stretches are compositionally biased toward low complexity: residues 625 to 661 and 675 to 697; these read AGFA…AGPT and PKGA…AGRV. A compositionally biased stretch (pro residues) spans 699-712; the sequence is PPGPSGNPGPPGPA. Positions 804–822 are enriched in low complexity; the sequence is PGLAGAPGEPGREGSPGNE. Positions 848-858 are enriched in pro residues; it reads APGPPGAPGPV. Residues 872–893 are compositionally biased toward low complexity; the sequence is PAGPAGSAGPAGPRGPAGALGL. The segment covering 894–908 has biased composition (basic and acidic residues); the sequence is RGDKGESGEAGERGM. Residues 924–960 show a composition bias toward low complexity; the sequence is AGSSGEQGPAGAAGPAGPRGPAGSAGSPGKDGMSGLP. Residues 976–988 show a composition bias toward pro residues; that stretch reads AGPPGPPGPPGAP. A Fibrillar collagen NC1 domain is found at 1062 to 1095; it reads TGTWGKLPLLDLAPMDVGAPDQEFGLEVGPVCFL.

This sequence belongs to the fibrillar collagen family.

Its subcellular location is the secreted. The protein resides in the extracellular space. It is found in the extracellular matrix. The polypeptide is Collagen, type I, alpha 1a (Epinephelus caninus (Dogtooth grouper)).